The following is a 310-amino-acid chain: NADH-cytochrome b5 reductase 1 (310 aa).

Residues Glu-32–Asn-52 traverse the membrane as a helical segment. Positions Thr-61 to Thr-166 constitute an FAD-binding FR-type domain. FAD is bound by residues Ala-146–Gly-161 and Lys-172–Leu-209.

It belongs to the flavoprotein pyridine nucleotide cytochrome reductase family. As to quaternary structure, monomer. Component of the 2-(3-amino-3-carboxypropyl)histidine synthase complex composed of DPH1, DPH2, DPH3 and a NADH-dependent reductase, predominantly CBR1. Requires FAD as cofactor.

It localises to the mitochondrion outer membrane. The enzyme catalyses 2 Fe(III)-[cytochrome b5] + NADH = 2 Fe(II)-[cytochrome b5] + NAD(+) + H(+). The catalysed reaction is 2 Fe(3+)-[Dph3] + NADH = 2 Fe(2+)-[Dph3] + NAD(+) + H(+). It participates in protein modification; peptidyl-diphthamide biosynthesis. Its function is as follows. NADH-dependent reductase for DPH3 and cytochrome b5. Required for the first step of diphthamide biosynthesis, a post-translational modification of histidine which occurs in elongation factor 2. DPH1 and DPH2 transfer a 3-amino-3-carboxypropyl (ACP) group from S-adenosyl-L-methionine (SAM) to a histidine residue, the reaction is assisted by a reduction system comprising DPH3 and a NADH-dependent reductase, predominantly CBR1. By reducing DPH3, also involved in the formation of the tRNA wobble base modification mcm5s 2U (5-methoxycarbonylmethyl-2-thiouridine), mediated by the elongator complex. The cytochrome b5/NADH cytochrome b5 reductase electron transfer system supports the catalytic activity of several sterol biosynthetic enzymes. In Ajellomyces capsulatus (strain NAm1 / WU24) (Darling's disease fungus), this protein is NADH-cytochrome b5 reductase 1 (CBR1).